The chain runs to 370 residues: GTPase Obg (370 aa).

Residues 1-159 (MKFIDEARIE…RMLRLELKVL (159 aa)) form the Obg domain. Positions 160–334 (ADVGLLGMPN…LCYAIYDYLA (175 aa)) constitute an OBG-type G domain. GTP is bound by residues 166-173 (GMPNAGKS), 191-195 (FTTLA), 213-216 (DIPG), 284-287 (NKLD), and 315-317 (SAL). Residues S173 and T193 each contribute to the Mg(2+) site. The tract at residues 344 to 370 (EEEDLATDVRFRDAPPADGGATPGGDA) is disordered.

Belongs to the TRAFAC class OBG-HflX-like GTPase superfamily. OBG GTPase family. Monomer. Mg(2+) is required as a cofactor.

It is found in the cytoplasm. In terms of biological role, an essential GTPase which binds GTP, GDP and possibly (p)ppGpp with moderate affinity, with high nucleotide exchange rates and a fairly low GTP hydrolysis rate. Plays a role in control of the cell cycle, stress response, ribosome biogenesis and in those bacteria that undergo differentiation, in morphogenesis control. The polypeptide is GTPase Obg (Burkholderia ambifaria (strain MC40-6)).